Consider the following 89-residue polypeptide: Small ribosomal subunit protein uS15c (89 aa).

This sequence belongs to the universal ribosomal protein uS15 family. Part of the 30S ribosomal subunit.

It is found in the plastid. This Aneura mirabilis (Parasitic liverwort) protein is Small ribosomal subunit protein uS15c (rps15).